Reading from the N-terminus, the 329-residue chain is MTRTPVNVTVTGAAGQIGYALLFRIASGQLLGADVPVKLRLLEITPALKAAEGTAMELDDCAFPLLQGIDITDDPNVAFDGTNVGLLVGARPRTKGMERGDLLSANGGIFKPQGKAINDNAADDVKILVVGNPANTNALIAQAAAPDVPAERFTAMTRLDHNRALTQLAKKTGSTVADIKRLTIWGNHSATQYPDIFHASVAGKNAAEVVNDEKWLAEDFIPTVAKRGAAIIEARGASSAASAANAAIDHVYTWVNGTADGDWTSMGIPSDGSYGVPEGLISSFPVTTKDGRYEIVQGLEINEFSRARIDASVKELEEEREAVRALGLI.

12-18 provides a ligand contact to NAD(+); that stretch reads GAAGQIG. Residues R93 and R99 each coordinate substrate. NAD(+) is bound by residues N106, Q113, and 130–132; that span reads VGN. 2 residues coordinate substrate: N132 and R163. H188 acts as the Proton acceptor in catalysis.

Belongs to the LDH/MDH superfamily. MDH type 2 family.

It catalyses the reaction (S)-malate + NAD(+) = oxaloacetate + NADH + H(+). With respect to regulation, strongly inhibited by Hg(2+) and Zn(2+). Activated by Na(+), NH(4)(+), Ca(2+), Cu(2+) and Mg(2+). Functionally, catalyzes the reversible oxidation of malate to oxaloacetate. Exhibits remarkably higher catalytic efficiency for oxaloacetate reduction than for malate oxidation in vitro. Highly specific for NAD(H). Can also use NADPH for oxaloacetate reduction, but catalytic efficiency is 97-fold higher with NADH. No activity detected with NADP(+) and malate. In Streptomyces avermitilis (strain ATCC 31267 / DSM 46492 / JCM 5070 / NBRC 14893 / NCIMB 12804 / NRRL 8165 / MA-4680), this protein is Malate dehydrogenase.